The chain runs to 247 residues: Uridylate kinase (247 aa).

15-18 serves as a coordination point for ATP; it reads KLSG. The tract at residues 23-28 is involved in allosteric activation by GTP; that stretch reads GDEGFG. Glycine 57 contributes to the UMP binding site. The ATP site is built by glycine 58 and arginine 62. UMP contacts are provided by residues aspartate 77 and 138-145; that span reads TGNPFFTT. The ATP site is built by threonine 165, tyrosine 171, and aspartate 174.

The protein belongs to the UMP kinase family. As to quaternary structure, homohexamer.

The protein resides in the cytoplasm. It carries out the reaction UMP + ATP = UDP + ADP. The protein operates within pyrimidine metabolism; CTP biosynthesis via de novo pathway; UDP from UMP (UMPK route): step 1/1. Allosterically activated by GTP. Inhibited by UTP. Its function is as follows. Catalyzes the reversible phosphorylation of UMP to UDP. The sequence is that of Uridylate kinase from Saccharophagus degradans (strain 2-40 / ATCC 43961 / DSM 17024).